Reading from the N-terminus, the 418-residue chain is MAEWKIYTPEGVQDILQNECFFKKNLEDRIRKVFRASGYYEVETPIVEFYDVFSTEENIIPQETMFKFFDQQGRILVLRPDLTIPIARVAATKLKDAAYPLRISYIGNAFKYNELGGGKQKEFTQAGVEIIGVNTPEADAEVIATAIDAVKATGLENFQIDIGQVEFFKGLMEETGLSEEETEKMRVLIDRKDFLGIEELVEEHNIRDDLKELILDFPKLFGSTDVIDRVEKYPINERSIKALNNLRSIINILDDYGLSKYVSVDLGMVQSLNYYSGTIFRGFTYGVGFPILSGGRYDRLVEKFGKSSPATGFSMGINMVMMALDRQKVEFEKPRVDTLVCYREEGRKTAFQICETLRKQGLAVEVDINGGDFETARNYAALKGIGGILKVLDDENIEIHNLEKGEVSKVTISELLKA.

The protein belongs to the class-II aminoacyl-tRNA synthetase family. HisZ subfamily. In terms of assembly, heteromultimer composed of HisG and HisZ subunits.

The protein resides in the cytoplasm. The protein operates within amino-acid biosynthesis; L-histidine biosynthesis; L-histidine from 5-phospho-alpha-D-ribose 1-diphosphate: step 1/9. Functionally, required for the first step of histidine biosynthesis. May allow the feedback regulation of ATP phosphoribosyltransferase activity by histidine. This chain is ATP phosphoribosyltransferase regulatory subunit, found in Acetivibrio thermocellus (strain ATCC 27405 / DSM 1237 / JCM 9322 / NBRC 103400 / NCIMB 10682 / NRRL B-4536 / VPI 7372) (Clostridium thermocellum).